The following is a 478-amino-acid chain: PRAME family member 15 (478 aa).

The stretch at R99–C126 is one LRR 1; degenerate repeat. An LRR 2; degenerate repeat occupies H181–N205. The LRR 3; degenerate repeat unit spans residues L206 to H232. An LRR 4; degenerate repeat occupies M233–K268. 5 LRR repeats span residues L269–L294, K295–K326, T327–L347, A351–R378, and C379–H403.

The protein belongs to the PRAME family.

This Homo sapiens (Human) protein is PRAME family member 15.